Reading from the N-terminus, the 295-residue chain is Bifunctional protein FolD (295 aa).

NADP(+) is bound by residues 163–165 (GRS), S188, and I229.

The protein belongs to the tetrahydrofolate dehydrogenase/cyclohydrolase family. In terms of assembly, homodimer.

The enzyme catalyses (6R)-5,10-methylene-5,6,7,8-tetrahydrofolate + NADP(+) = (6R)-5,10-methenyltetrahydrofolate + NADPH. The catalysed reaction is (6R)-5,10-methenyltetrahydrofolate + H2O = (6R)-10-formyltetrahydrofolate + H(+). It participates in one-carbon metabolism; tetrahydrofolate interconversion. Its function is as follows. Catalyzes the oxidation of 5,10-methylenetetrahydrofolate to 5,10-methenyltetrahydrofolate and then the hydrolysis of 5,10-methenyltetrahydrofolate to 10-formyltetrahydrofolate. The sequence is that of Bifunctional protein FolD from Hyphomonas neptunium (strain ATCC 15444).